The sequence spans 251 residues: uncharacterized protein (251 aa).

Positions 1-25 are cleaved as a signal peptide; sequence MRKKKFLSRFSFSSLFLLCGTLLSA. Residue Cys-26 is the site of N-palmitoyl cysteine attachment. The S-diacylglycerol cysteine moiety is linked to residue Cys-26.

The protein belongs to the MG439/MG440 family.

Its subcellular location is the cell membrane. This is an uncharacterized protein from Mycoplasma pneumoniae (strain ATCC 29342 / M129 / Subtype 1) (Mycoplasmoides pneumoniae).